The following is a 107-amino-acid chain: Dispanin subfamily A member 2b (107 aa).

Residues 1 to 31 are Extracellular-facing; sequence MEYRTDQVPMSPRSVQGAPGTLPIRDHLPWS. The chain crosses the membrane as a helical span at residues 32–52; sequence IFNLFYMNVCCLGLTAMIFSV. Residues Cys-41 and Cys-42 are each lipidated (S-palmitoyl cysteine). Over 53 to 77 the chain is Cytoplasmic; that stretch reads KSRDRKVVGDVEGARHYGSTARSLN. The helical transmembrane segment at 78-98 threads the bilayer; that stretch reads IAATVLGILLIIILIGLAATG. Topologically, residues 99-107 are extracellular; sequence TIQALKYKG.

The protein belongs to the CD225/Dispanin family. Expressed various cell types in torpedo electric organ and muscle, especially fibroblasts, capillary endothelial cells, and axonal cuff cells.

It is found in the cell membrane. The sequence is that of Dispanin subfamily A member 2b from Torpedo marmorata (Marbled electric ray).